Here is a 557-residue protein sequence, read N- to C-terminus: 2-isopropylmalate synthase (557 aa).

In terms of domain architecture, Pyruvate carboxyltransferase spans 33–307; sequence PIWCSSDLRD…DPQLDFSDID (275 aa). Positions 42, 246, 248, and 282 each coordinate Mg(2+). The regulatory domain stretch occupies residues 439–557; the sequence is ANAPYALVSH…SLSQQEAKAA (119 aa).

This sequence belongs to the alpha-IPM synthase/homocitrate synthase family. LeuA type 2 subfamily. In terms of assembly, homodimer. The cofactor is Mg(2+).

The protein resides in the cytoplasm. It catalyses the reaction 3-methyl-2-oxobutanoate + acetyl-CoA + H2O = (2S)-2-isopropylmalate + CoA + H(+). It functions in the pathway amino-acid biosynthesis; L-leucine biosynthesis; L-leucine from 3-methyl-2-oxobutanoate: step 1/4. Functionally, catalyzes the condensation of the acetyl group of acetyl-CoA with 3-methyl-2-oxobutanoate (2-ketoisovalerate) to form 3-carboxy-3-hydroxy-4-methylpentanoate (2-isopropylmalate). This is 2-isopropylmalate synthase from Pseudomonas putida (strain GB-1).